Here is a 308-residue protein sequence, read N- to C-terminus: D-alanine--D-alanine ligase (308 aa).

Positions 103–302 (KTVMKTAGVP…FDELVQWMVE (200 aa)) constitute an ATP-grasp domain. 130–184 (MEPPYVIKPVADGSSVGVYIITEQHQHPPQELFRDDWAYGDKLLVEKYVAGKELT) is an ATP binding site. Positions 252, 269, and 271 each coordinate Mg(2+).

It belongs to the D-alanine--D-alanine ligase family. Mg(2+) is required as a cofactor. It depends on Mn(2+) as a cofactor.

Its subcellular location is the cytoplasm. It catalyses the reaction 2 D-alanine + ATP = D-alanyl-D-alanine + ADP + phosphate + H(+). The protein operates within cell wall biogenesis; peptidoglycan biosynthesis. Cell wall formation. This is D-alanine--D-alanine ligase from Rhodopseudomonas palustris (strain BisA53).